Here is a 278-residue protein sequence, read N- to C-terminus: Neuronal membrane glycoprotein M6-a (278 aa).

M1 is modified (N-acetylmethionine). The Cytoplasmic portion of the chain corresponds to 1–22 (MEENMEEGQTQKGCFECCIKCL). Residues 23 to 43 (GGIPYASLIATILLYAGVALF) form a helical membrane-spanning segment. Residues 44-84 (CGCGHEALSGTVNILQTYFEMARTAGDTLDVFTMIDIFKYV) lie on the Extracellular side of the membrane. A helical membrane pass occupies residues 85-105 (IYGIAAAFFVYGILLMVEGFF). Topologically, residues 106–127 (TTGAIKDLYGDFKITTCGRCVS) are cytoplasmic. A helical membrane pass occupies residues 128–148 (AWFIMLTYLFMLAWLGVTAFT). The Extracellular segment spans residues 149 to 213 (SLPVYMYFNL…STELNMTFHL (65 aa)). N-linked (GlcNAc...) asparagine glycosylation occurs at N164. C174 and C192 are disulfide-bonded. The N-linked (GlcNAc...) asparagine glycan is linked to N208. The chain crosses the membrane as a helical span at residues 214–234 (FIVALAGAGAAVIAMVHYLMV). The Cytoplasmic segment spans residues 235-278 (LSANWAYVKDACRMQKYEDIKSKEEQELHDIHSTRSKERLNAYT). S256 is modified (phosphoserine). T278 bears the Phosphothreonine mark.

It belongs to the myelin proteolipid protein family. As to quaternary structure, interacts with OPRM1. Interacts with palmitoyltransferase ZDHHC17/HIP14; the interaction leads to palmitoylation of GPM6A. In terms of processing, N-glycosylated. Post-translationally, palmitoylated by ZDHHC17/HIP14.

The protein localises to the cell membrane. The protein resides in the cell projection. It is found in the axon. Its subcellular location is the growth cone. It localises to the dendritic spine. The protein localises to the filopodium. The protein resides in the neuron projection. In terms of biological role, involved in neuronal differentiation, including differentiation and migration of neuronal stem cells. Plays a role in neuronal plasticity and is involved in neurite and filopodia outgrowth, filopodia motility and probably synapse formation. GPM6A-induced filopodia formation involves mitogen-activated protein kinase (MAPK) and Src signaling pathways. May be involved in neuronal NGF-dependent Ca(2+) influx. May be involved in regulation of endocytosis and intracellular trafficking of G-protein-coupled receptors (GPCRs); may enhance internalization and recycling of mu-type opioid receptor. The polypeptide is Neuronal membrane glycoprotein M6-a (GPM6A) (Bos taurus (Bovine)).